We begin with the raw amino-acid sequence, 1299 residues long: DNA-directed RNA polymerase subunit beta' (1299 aa).

4 residues coordinate Zn(2+): cysteine 60, cysteine 62, cysteine 75, and cysteine 78. Positions glycine 385–methionine 405 are disordered. Aspartate 535, aspartate 537, and aspartate 539 together coordinate Mg(2+). Positions 886, 962, 969, and 972 each coordinate Zn(2+).

Belongs to the RNA polymerase beta' chain family. The RNAP catalytic core consists of 2 alpha, 1 beta, 1 beta' and 1 omega subunit. When a sigma factor is associated with the core the holoenzyme is formed, which can initiate transcription. Mg(2+) is required as a cofactor. The cofactor is Zn(2+).

The enzyme catalyses RNA(n) + a ribonucleoside 5'-triphosphate = RNA(n+1) + diphosphate. Functionally, DNA-dependent RNA polymerase catalyzes the transcription of DNA into RNA using the four ribonucleoside triphosphates as substrates. The sequence is that of DNA-directed RNA polymerase subunit beta' from Streptomyces coelicolor (strain ATCC BAA-471 / A3(2) / M145).